The primary structure comprises 192 residues: uncharacterized protein (192 aa).

2 helical membrane-spanning segments follow: residues I31–E51 and V119–I139.

It localises to the cell membrane. This is an uncharacterized protein from Thermotoga maritima (strain ATCC 43589 / DSM 3109 / JCM 10099 / NBRC 100826 / MSB8).